The chain runs to 210 residues: 2-dehydro-3-deoxy-phosphogluconate aldolase (210 aa).

Glutamate 41 functions as the Proton acceptor in the catalytic mechanism. The pyruvate site is built by arginine 45, threonine 69, and lysine 129. Residue lysine 129 is the Schiff-base intermediate with substrate of the active site.

It belongs to the KHG/KDPG aldolase family. As to quaternary structure, homotrimer.

Its subcellular location is the cytoplasm. The catalysed reaction is 2-dehydro-3-deoxy-6-phospho-D-gluconate = D-glyceraldehyde 3-phosphate + pyruvate. It participates in carbohydrate acid metabolism; 2-dehydro-3-deoxy-D-gluconate degradation; D-glyceraldehyde 3-phosphate and pyruvate from 2-dehydro-3-deoxy-D-gluconate: step 2/2. In terms of biological role, catalyzes the reversible, stereospecific retro-aldol cleavage of 2-keto-3-deoxy-6-phosphogluconate (KDPG) to pyruvate and D-glyceraldehyde-3-phosphate. The sequence is that of 2-dehydro-3-deoxy-phosphogluconate aldolase (eda) from Treponema pallidum (strain Nichols).